The chain runs to 371 residues: Glycerate kinase (371 aa).

The protein belongs to the glycerate kinase type-1 family.

The enzyme catalyses (R)-glycerate + ATP = (2R)-3-phosphoglycerate + ADP + H(+). In Neisseria meningitidis serogroup B (strain ATCC BAA-335 / MC58), this protein is Glycerate kinase (glxK).